A 140-amino-acid chain; its full sequence is Extracellular globin-1 (140 aa).

The Globin domain maps to glutamate 1 to proline 140. An intrachain disulfide couples cysteine 2 to cysteine 130. A heme b-binding site is contributed by histidine 93.

It belongs to the globin family. In terms of assembly, the giant hemoglobins of worms are formed of a monomeric subunit and a disulfide-bonded trimer. This subunit is monomeric.

It localises to the secreted. The polypeptide is Extracellular globin-1 (Metaphire hilgendorfi (Earthworm)).